An 89-amino-acid chain; its full sequence is MKLAAIFLVSCVLLSLLPSLTIAEKRPWCPTRKQIFDGSCNRTDYTQCFNDLRNTWDDIGDLCPTDCTCTPQPQNKRLCYCRYLPCPST.

Positions 1–23 (MKLAAIFLVSCVLLSLLPSLTIA) are cleaved as a signal peptide. Disulfide bonds link Cys-29-Cys-86, Cys-40-Cys-69, Cys-48-Cys-79, and Cys-67-Cys-81.

Belongs to the DEFL family.

It localises to the secreted. The protein is Defensin-like protein 250 (SCRL8) of Arabidopsis thaliana (Mouse-ear cress).